A 169-amino-acid polypeptide reads, in one-letter code: MSSAARHHCSGLRERLGCVQCSFCATVLLVSVPCSSVLRVVAVQCGHCSGILSAVNLPPSPVSASIELTPQELDAGPPPGEYSDESSGDDREGRDAEDDAPAPAAAAVANKPPGRKQRTPSAYNCFVKEEIKRIKSMEPNITHKQAFSTAAKNWAHLPRIQQKRGRDSC.

The C4-type zinc-finger motif lies at 21–48 (CSFCATVLLVSVPCSSVLRVVAVQCGHC). The tract at residues 63-122 (SASIELTPQELDAGPPPGEYSDESSGDDREGRDAEDDAPAPAAAAVANKPPGRKQRTPSA) is disordered.

Belongs to the YABBY family. In terms of tissue distribution, expressed in leaf sheaths and flowers.

The protein resides in the nucleus. The sequence is that of Protein YABBY 7 (YAB7) from Oryza sativa subsp. japonica (Rice).